A 333-amino-acid chain; its full sequence is Biotin synthase (333 aa).

The Radical SAM core domain occupies 47–273 (YYGNKVKLNM…MNPTKEIRIA (227 aa)). [4Fe-4S] cluster-binding residues include Cys65, Cys69, and Cys72. Residues Cys109, Cys141, Cys201, and Arg271 each coordinate [2Fe-2S] cluster.

The protein belongs to the radical SAM superfamily. Biotin synthase family. As to quaternary structure, homodimer. Requires [4Fe-4S] cluster as cofactor. [2Fe-2S] cluster serves as cofactor.

It catalyses the reaction (4R,5S)-dethiobiotin + (sulfur carrier)-SH + 2 reduced [2Fe-2S]-[ferredoxin] + 2 S-adenosyl-L-methionine = (sulfur carrier)-H + biotin + 2 5'-deoxyadenosine + 2 L-methionine + 2 oxidized [2Fe-2S]-[ferredoxin]. It functions in the pathway cofactor biosynthesis; biotin biosynthesis; biotin from 7,8-diaminononanoate: step 2/2. Functionally, catalyzes the conversion of dethiobiotin (DTB) to biotin by the insertion of a sulfur atom into dethiobiotin via a radical-based mechanism. The protein is Biotin synthase of Geobacillus kaustophilus (strain HTA426).